The sequence spans 225 residues: ATP-dependent dethiobiotin synthetase BioD (225 aa).

Position 12-17 (12-17 (EIGKTY)) interacts with ATP. Residue threonine 16 participates in Mg(2+) binding. Lysine 37 is a catalytic residue. Substrate is bound at residue serine 41. ATP-binding positions include aspartate 55, 122 to 125 (EGVG), and 182 to 183 (SE). Mg(2+) is bound by residues aspartate 55 and glutamate 122.

The protein belongs to the dethiobiotin synthetase family. Homodimer. Requires Mg(2+) as cofactor.

It is found in the cytoplasm. It catalyses the reaction (7R,8S)-7,8-diammoniononanoate + CO2 + ATP = (4R,5S)-dethiobiotin + ADP + phosphate + 3 H(+). It participates in cofactor biosynthesis; biotin biosynthesis; biotin from 7,8-diaminononanoate: step 1/2. Functionally, catalyzes a mechanistically unusual reaction, the ATP-dependent insertion of CO2 between the N7 and N8 nitrogen atoms of 7,8-diaminopelargonic acid (DAPA, also called 7,8-diammoniononanoate) to form a ureido ring. In Methylobacterium nodulans (strain LMG 21967 / CNCM I-2342 / ORS 2060), this protein is ATP-dependent dethiobiotin synthetase BioD.